Consider the following 386-residue polypeptide: Phosphoglycerate kinase (386 aa).

Substrate contacts are provided by residues 21 to 23 (DLN), Arg-36, 59 to 62 (HLGR), Arg-112, and Arg-145. ATP contacts are provided by residues Lys-196, Glu-313, and 339–342 (GGDT).

Belongs to the phosphoglycerate kinase family. In terms of assembly, monomer.

The protein resides in the cytoplasm. It catalyses the reaction (2R)-3-phosphoglycerate + ATP = (2R)-3-phospho-glyceroyl phosphate + ADP. It functions in the pathway carbohydrate degradation; glycolysis; pyruvate from D-glyceraldehyde 3-phosphate: step 2/5. The protein is Phosphoglycerate kinase of Haemophilus influenzae (strain PittEE).